A 391-amino-acid chain; its full sequence is Cyclin-A1 (391 aa).

This sequence belongs to the cyclin family. Cyclin AB subfamily. As to quaternary structure, interacts with the CDK1 and the CDK2 protein kinases to form a serine/threonine kinase holoenzyme complex. The cyclin subunit imparts substrate specificity to the complex.

It localises to the nucleus. Functionally, may be involved in the control of the cell cycle at the G1/S (start) and G2/M (mitosis) transitions. In Carassius auratus (Goldfish), this protein is Cyclin-A1 (ccna1).